A 78-amino-acid chain; its full sequence is Acyl carrier protein (78 aa).

The 76-residue stretch at 2-77 (SDTADRVQKI…DATKYIEEHK (76 aa)) folds into the Carrier domain. The residue at position 37 (serine 37) is an O-(pantetheine 4'-phosphoryl)serine.

The protein belongs to the acyl carrier protein (ACP) family. Post-translationally, 4'-phosphopantetheine is transferred from CoA to a specific serine of apo-ACP by AcpS. This modification is essential for activity because fatty acids are bound in thioester linkage to the sulfhydryl of the prosthetic group.

Its subcellular location is the cytoplasm. The protein operates within lipid metabolism; fatty acid biosynthesis. Its function is as follows. Carrier of the growing fatty acid chain in fatty acid biosynthesis. The sequence is that of Acyl carrier protein from Erythrobacter litoralis (strain HTCC2594).